Here is a 158-residue protein sequence, read N- to C-terminus: 2-C-methyl-D-erythritol 2,4-cyclodiphosphate synthase (158 aa).

A divalent metal cation-binding residues include Asp-9 and His-11. Residues 9–11 and 35–36 contribute to the 4-CDP-2-C-methyl-D-erythritol 2-phosphate site; these read DVH and HS. Residue His-43 coordinates a divalent metal cation. Residues 57 to 59, 62 to 66, 133 to 136, Phe-140, and Arg-143 contribute to the 4-CDP-2-C-methyl-D-erythritol 2-phosphate site; these read DIG, FPDTD, and TTTE.

The protein belongs to the IspF family. In terms of assembly, homotrimer. A divalent metal cation is required as a cofactor.

It carries out the reaction 4-CDP-2-C-methyl-D-erythritol 2-phosphate = 2-C-methyl-D-erythritol 2,4-cyclic diphosphate + CMP. The protein operates within isoprenoid biosynthesis; isopentenyl diphosphate biosynthesis via DXP pathway; isopentenyl diphosphate from 1-deoxy-D-xylulose 5-phosphate: step 4/6. Involved in the biosynthesis of isopentenyl diphosphate (IPP) and dimethylallyl diphosphate (DMAPP), two major building blocks of isoprenoid compounds. Catalyzes the conversion of 4-diphosphocytidyl-2-C-methyl-D-erythritol 2-phosphate (CDP-ME2P) to 2-C-methyl-D-erythritol 2,4-cyclodiphosphate (ME-CPP) with a corresponding release of cytidine 5-monophosphate (CMP). The sequence is that of 2-C-methyl-D-erythritol 2,4-cyclodiphosphate synthase from Geobacillus kaustophilus (strain HTA426).